A 34-amino-acid chain; its full sequence is Photosystem II reaction center protein M (34 aa).

A helical transmembrane segment spans residues 7-27 (GFVASLMFILVPAIFLIVLYI).

The protein belongs to the PsbM family. As to quaternary structure, PSII is composed of 1 copy each of membrane proteins PsbA, PsbB, PsbC, PsbD, PsbE, PsbF, PsbH, PsbI, PsbJ, PsbK, PsbL, PsbM, PsbT, PsbX, PsbY, PsbZ, Psb30/Ycf12, peripheral proteins PsbO, CyanoQ (PsbQ), PsbU, PsbV and a large number of cofactors. It forms dimeric complexes.

Its subcellular location is the cellular thylakoid membrane. One of the components of the core complex of photosystem II (PSII). PSII is a light-driven water:plastoquinone oxidoreductase that uses light energy to abstract electrons from H(2)O, generating O(2) and a proton gradient subsequently used for ATP formation. It consists of a core antenna complex that captures photons, and an electron transfer chain that converts photonic excitation into a charge separation. This subunit is found at the monomer-monomer interface. The polypeptide is Photosystem II reaction center protein M (Synechococcus sp. (strain CC9902)).